Reading from the N-terminus, the 421-residue chain is UDP-N-acetylglucosamine 1-carboxyvinyltransferase 2 (421 aa).

Position 22-23 (22-23 (KN)) interacts with phosphoenolpyruvate. UDP-N-acetyl-alpha-D-glucosamine is bound at residue arginine 95. The Proton donor role is filled by cysteine 119. Residue cysteine 119 is modified to 2-(S-cysteinyl)pyruvic acid O-phosphothioketal. Residues 124 to 128 (RPIEQ), aspartate 308, and valine 330 contribute to the UDP-N-acetyl-alpha-D-glucosamine site.

The protein belongs to the EPSP synthase family. MurA subfamily.

Its subcellular location is the cytoplasm. The enzyme catalyses phosphoenolpyruvate + UDP-N-acetyl-alpha-D-glucosamine = UDP-N-acetyl-3-O-(1-carboxyvinyl)-alpha-D-glucosamine + phosphate. Its pathway is cell wall biogenesis; peptidoglycan biosynthesis. Functionally, cell wall formation. Adds enolpyruvyl to UDP-N-acetylglucosamine. This is UDP-N-acetylglucosamine 1-carboxyvinyltransferase 2 from Staphylococcus saprophyticus subsp. saprophyticus (strain ATCC 15305 / DSM 20229 / NCIMB 8711 / NCTC 7292 / S-41).